The primary structure comprises 497 residues: L-amino-acid oxidase BjussuLAAO-I (497 aa).

Residues 1-13 form the signal peptide; sequence MNVFFMFSKPGKL. Residues C23 and C186 are joined by a disulfide bond. Residues 56 to 57, 76 to 77, 76 to 80, Q84, and 100 to 103 contribute to the FAD site; these read MS, EA, EASER, and GPMR. R103 contributes to the substrate binding site. A glycan (N-linked (GlcNAc...) asparagine) is linked at N185. H236 contacts substrate. V274 contributes to the FAD binding site. A disulfide bridge connects residues C344 and C425. Y385 lines the substrate pocket. FAD-binding positions include E470, 477-482, and 478-482; these read GWIAST and WIAST. 477–478 is a substrate binding site; the sequence is GW.

This sequence belongs to the flavin monoamine oxidase family. FIG1 subfamily. Homodimer; non-covalently linked. It depends on FAD as a cofactor. In terms of tissue distribution, expressed by the venom gland.

The protein localises to the secreted. It carries out the reaction an L-alpha-amino acid + O2 + H2O = a 2-oxocarboxylate + H2O2 + NH4(+). It catalyses the reaction L-leucine + O2 + H2O = 4-methyl-2-oxopentanoate + H2O2 + NH4(+). The enzyme catalyses L-phenylalanine + O2 + H2O = 3-phenylpyruvate + H2O2 + NH4(+). The catalysed reaction is L-tryptophan + O2 + H2O = indole-3-pyruvate + H2O2 + NH4(+). It carries out the reaction L-methionine + O2 + H2O = 4-methylsulfanyl-2-oxobutanoate + H2O2 + NH4(+). It catalyses the reaction L-isoleucine + O2 + H2O = (S)-3-methyl-2-oxopentanoate + H2O2 + NH4(+). The enzyme catalyses L-tyrosine + O2 + H2O = 3-(4-hydroxyphenyl)pyruvate + H2O2 + NH4(+). The catalysed reaction is L-cysteine + O2 + H2O = 2-oxo-3-sulfanylpropanoate + H2O2 + NH4(+). Catalyzes an oxidative deamination of predominantly hydrophobic and aromatic L-amino acids, thus producing hydrogen peroxide that may contribute to the diverse toxic effects of this enzyme. Shows high specificity for L-Met, L-Leu, L-Phe, L-Tyr, L-Ile, L-Trp, a moderate activity on L-Cys and low activity on L-Val, L-Lys, L-Arg, L-His, L-Gln, L-Thr and L-Ser. Exhibits diverse biological activities, such as hemorrhage, hemolysis, edema, apoptosis of vascular endothelial cells or tumor cell lines, and antibacterial, as well as regulation of platelet aggregation. Effects of snake L-amino oxidases on platelets are controversial, since they either induce aggregation or inhibit agonist-induced aggregation. These different effects are probably due to different experimental conditions. In vitro, shows parasiticidal activities against both trypanosomes and leishmania, as a result of enzyme-catalyzed hydrogen peroxide production. The sequence is that of L-amino-acid oxidase BjussuLAAO-I from Bothrops jararacussu (Jararacussu).